An 84-amino-acid polypeptide reads, in one-letter code: MVSVKVLFFGEAFQLVGKREETVEFPAETDYEELRRIILEKYPALSKIEKVMMLAVDQEYANPGDRFELERFTEIAVIPPLSGG.

Residue Gly84 is modified to 1-thioglycine; alternate. Gly84 bears the Glycyl adenylate; alternate mark.

It belongs to the MoaD family. MOCS2A subfamily. As to quaternary structure, heterotetramer; composed of 2 small (MOCS2A) and 2 large (MOCS2B) subunits. Post-translationally, C-terminal thiocarboxylation occurs in 2 steps, it is first acyl-adenylated (-COAMP) via the hesA/moeB/thiF part of MOCS3, then thiocarboxylated (-COSH) via the rhodanese domain of MOCS3.

It localises to the cytoplasm. The protein operates within cofactor biosynthesis; molybdopterin biosynthesis. Functionally, acts as a sulfur carrier required for molybdopterin biosynthesis. Component of the molybdopterin synthase complex that catalyzes the conversion of precursor Z into molybdopterin by mediating the incorporation of 2 sulfur atoms into precursor Z to generate a dithiolene group. In the complex, serves as sulfur donor by being thiocarboxylated (-COSH) at its C-terminus by MOCS3. After interaction with MOCS2B, the sulfur is then transferred to precursor Z to form molybdopterin. The sequence is that of Molybdopterin synthase sulfur carrier subunit from Caenorhabditis briggsae.